A 544-amino-acid chain; its full sequence is Tyrosyl-DNA phosphodiesterase 1 (544 aa).

Catalysis depends on His182, which acts as the Nucleophile. Lys184 serves as a coordination point for substrate. Residues 312 to 316 (SIGTS) are interaction with DNA. His432 functions as the Proton donor/acceptor in the catalytic mechanism. Lys434 is a substrate binding site.

This sequence belongs to the tyrosyl-DNA phosphodiesterase family.

Its subcellular location is the nucleus. Functionally, DNA repair enzyme that can remove a variety of covalent adducts from DNA through hydrolysis of a 3'-phosphodiester bond, giving rise to DNA with a free 3' phosphate. Catalyzes the hydrolysis of dead-end complexes between DNA and the topoisomerase I active site tyrosine residue. Hydrolyzes 3'-phosphoglycolates on protruding 3' ends on DNA double-strand breaks due to DNA damage by radiation and free radicals. Also cleaves 5' phosphotyrosyl adducts resulting from dead-end complexes between DNA and the active site tyrosine of topoisomerase II. Contributes to DNA repair after radiation damage. Acts on blunt-ended double-strand DNA breaks and on single-stranded DNA. May have low 3'exonuclease activity and may be able to remove a single nucleoside from the 3'end of DNA and RNA molecules with 3'hydroxyl groups. Has no exonuclease activity towards DNA or RNA with a 3'phosphate. This Saccharomyces cerevisiae (strain ATCC 204508 / S288c) (Baker's yeast) protein is Tyrosyl-DNA phosphodiesterase 1 (TDP1).